We begin with the raw amino-acid sequence, 331 residues long: Holliday junction branch migration complex subunit RuvB (331 aa).

A large ATPase domain (RuvB-L) region spans residues 1-186 (MAKTMMQDRL…FGIVQRLEFY (186 aa)). Residues I25, R26, G67, K70, T71, T72, 133–135 (EDF), R176, Y186, and R223 contribute to the ATP site. Residue T71 coordinates Mg(2+). Residues 187–257 (NIADLTTIVS…IAGSALDMLA (71 aa)) form a small ATPAse domain (RuvB-S) region. A head domain (RuvB-H) region spans residues 260-331 (RRGLDHLDRR…LTQMAIDQML (72 aa)). DNA-binding residues include R296, R315, and R320.

It belongs to the RuvB family. In terms of assembly, homohexamer. Forms an RuvA(8)-RuvB(12)-Holliday junction (HJ) complex. HJ DNA is sandwiched between 2 RuvA tetramers; dsDNA enters through RuvA and exits via RuvB. An RuvB hexamer assembles on each DNA strand where it exits the tetramer. Each RuvB hexamer is contacted by two RuvA subunits (via domain III) on 2 adjacent RuvB subunits; this complex drives branch migration. In the full resolvosome a probable DNA-RuvA(4)-RuvB(12)-RuvC(2) complex forms which resolves the HJ.

It is found in the cytoplasm. It carries out the reaction ATP + H2O = ADP + phosphate + H(+). Functionally, the RuvA-RuvB-RuvC complex processes Holliday junction (HJ) DNA during genetic recombination and DNA repair, while the RuvA-RuvB complex plays an important role in the rescue of blocked DNA replication forks via replication fork reversal (RFR). RuvA specifically binds to HJ cruciform DNA, conferring on it an open structure. The RuvB hexamer acts as an ATP-dependent pump, pulling dsDNA into and through the RuvAB complex. RuvB forms 2 homohexamers on either side of HJ DNA bound by 1 or 2 RuvA tetramers; 4 subunits per hexamer contact DNA at a time. Coordinated motions by a converter formed by DNA-disengaged RuvB subunits stimulates ATP hydrolysis and nucleotide exchange. Immobilization of the converter enables RuvB to convert the ATP-contained energy into a lever motion, pulling 2 nucleotides of DNA out of the RuvA tetramer per ATP hydrolyzed, thus driving DNA branch migration. The RuvB motors rotate together with the DNA substrate, which together with the progressing nucleotide cycle form the mechanistic basis for DNA recombination by continuous HJ branch migration. Branch migration allows RuvC to scan DNA until it finds its consensus sequence, where it cleaves and resolves cruciform DNA. The chain is Holliday junction branch migration complex subunit RuvB from Psychrobacter cryohalolentis (strain ATCC BAA-1226 / DSM 17306 / VKM B-2378 / K5).